The sequence spans 178 residues: Inorganic pyrophosphatase (178 aa).

Substrate contacts are provided by Lys-29, Arg-43, and Tyr-55. Mg(2+) is bound by residues Asp-65, Asp-70, and Asp-102. Residue Tyr-141 coordinates substrate.

Belongs to the PPase family. In terms of assembly, homohexamer. Mg(2+) serves as cofactor.

The protein resides in the cytoplasm. It catalyses the reaction diphosphate + H2O = 2 phosphate + H(+). Its function is as follows. Catalyzes the hydrolysis of inorganic pyrophosphate (PPi) forming two phosphate ions. The sequence is that of Inorganic pyrophosphatase from Rickettsia typhi (strain ATCC VR-144 / Wilmington).